A 141-amino-acid polypeptide reads, in one-letter code: Large ribosomal subunit protein uL11 (141 aa).

The protein belongs to the universal ribosomal protein uL11 family. In terms of assembly, part of the ribosomal stalk of the 50S ribosomal subunit. Interacts with L10 and the large rRNA to form the base of the stalk. L10 forms an elongated spine to which L12 dimers bind in a sequential fashion forming a multimeric L10(L12)X complex. One or more lysine residues are methylated.

Its function is as follows. Forms part of the ribosomal stalk which helps the ribosome interact with GTP-bound translation factors. The sequence is that of Large ribosomal subunit protein uL11 from Tropheryma whipplei (strain TW08/27) (Whipple's bacillus).